Reading from the N-terminus, the 413-residue chain is MPISIPLNATLQYSSPSSSSSSSSLVPSSPLFSPIPSTTVSLTGIRQRCLRMVTSCVSNAQKSVLNGATDSVSVVGREQIRLGLPSKGRMAADSLDLLKDCQLFVKQVNPRQYVAQIPQLPNTEVWFQRPKDIVRKLLSGDLDLGIVGLDIVGEFGQGNEDLIIVHEALNFGDCHLSLAIPNYGIFENIKSLKELAQMPQWTEERPLRVATGFTYLGPKFMKDNGIKHVTFSTADGALEAAPAMGIADAILDLVSSGTTLKENNLKEIEGGVVLESQAALVASRRALTERKGALETVHEILERLEAHLKANGQFTVVANMRGTDAEEVAERVKTQPSLSGLQGPTISPVYCKRDGKVTIEYYAIVICVPKKALYESVQQLRAVGGSGVLVSPVTYIFHEETPRWSQLLSNLGL.

A chloroplast-targeting transit peptide spans 1 to 57 (MPISIPLNATLQYSSPSSSSSSSSLVPSSPLFSPIPSTTVSLTGIRQRCLRMVTSCV).

Belongs to the ATP phosphoribosyltransferase family. Long subfamily. Mg(2+) is required as a cofactor.

Its subcellular location is the plastid. The protein resides in the chloroplast. The enzyme catalyses 1-(5-phospho-beta-D-ribosyl)-ATP + diphosphate = 5-phospho-alpha-D-ribose 1-diphosphate + ATP. Its pathway is amino-acid biosynthesis; L-histidine biosynthesis; L-histidine from 5-phospho-alpha-D-ribose 1-diphosphate: step 1/9. With respect to regulation, feedback inhibited by L-histidine. Its function is as follows. Catalyzes the condensation of ATP and 5-phosphoribose 1-diphosphate to form N'-(5'-phosphoribosyl)-ATP (PR-ATP). The protein is ATP phosphoribosyltransferase 2, chloroplastic (HISN1B) of Arabidopsis thaliana (Mouse-ear cress).